The following is a 181-amino-acid chain: Photosystem I assembly protein Ycf4 (181 aa).

The next 2 helical transmembrane spans lie at 19–39 (YFWA…GISS) and 62–82 (VMMF…LTII).

The protein belongs to the Ycf4 family.

It is found in the plastid. Its subcellular location is the chloroplast thylakoid membrane. Functionally, seems to be required for the assembly of the photosystem I complex. This is Photosystem I assembly protein Ycf4 from Phaeodactylum tricornutum (strain CCAP 1055/1).